Consider the following 376-residue polypeptide: Putative glutamate--cysteine ligase 2 (376 aa).

This sequence belongs to the glutamate--cysteine ligase type 2 family. YbdK subfamily.

The enzyme catalyses L-cysteine + L-glutamate + ATP = gamma-L-glutamyl-L-cysteine + ADP + phosphate + H(+). Functionally, ATP-dependent carboxylate-amine ligase which exhibits weak glutamate--cysteine ligase activity. In Mycolicibacterium paratuberculosis (strain ATCC BAA-968 / K-10) (Mycobacterium paratuberculosis), this protein is Putative glutamate--cysteine ligase 2.